A 417-amino-acid polypeptide reads, in one-letter code: Gamma-glutamyl phosphate reductase (417 aa).

Belongs to the gamma-glutamyl phosphate reductase family.

The protein localises to the cytoplasm. The enzyme catalyses L-glutamate 5-semialdehyde + phosphate + NADP(+) = L-glutamyl 5-phosphate + NADPH + H(+). It participates in amino-acid biosynthesis; L-proline biosynthesis; L-glutamate 5-semialdehyde from L-glutamate: step 2/2. Its function is as follows. Catalyzes the NADPH-dependent reduction of L-glutamate 5-phosphate into L-glutamate 5-semialdehyde and phosphate. The product spontaneously undergoes cyclization to form 1-pyrroline-5-carboxylate. In Erwinia tasmaniensis (strain DSM 17950 / CFBP 7177 / CIP 109463 / NCPPB 4357 / Et1/99), this protein is Gamma-glutamyl phosphate reductase.